A 100-amino-acid polypeptide reads, in one-letter code: Aspartyl/glutamyl-tRNA(Asn/Gln) amidotransferase subunit C (100 aa).

The protein belongs to the GatC family. In terms of assembly, heterotrimer of A, B and C subunits.

It carries out the reaction L-glutamyl-tRNA(Gln) + L-glutamine + ATP + H2O = L-glutaminyl-tRNA(Gln) + L-glutamate + ADP + phosphate + H(+). The catalysed reaction is L-aspartyl-tRNA(Asn) + L-glutamine + ATP + H2O = L-asparaginyl-tRNA(Asn) + L-glutamate + ADP + phosphate + 2 H(+). Its function is as follows. Allows the formation of correctly charged Asn-tRNA(Asn) or Gln-tRNA(Gln) through the transamidation of misacylated Asp-tRNA(Asn) or Glu-tRNA(Gln) in organisms which lack either or both of asparaginyl-tRNA or glutaminyl-tRNA synthetases. The reaction takes place in the presence of glutamine and ATP through an activated phospho-Asp-tRNA(Asn) or phospho-Glu-tRNA(Gln). This Rickettsia bellii (strain RML369-C) protein is Aspartyl/glutamyl-tRNA(Asn/Gln) amidotransferase subunit C.